The primary structure comprises 481 residues: Probable cytosol aminopeptidase (481 aa).

Residues lysine 247 and aspartate 252 each contribute to the Mn(2+) site. The active site involves lysine 259. The Mn(2+) site is built by aspartate 270, aspartate 329, and glutamate 331. Arginine 333 is an active-site residue.

Belongs to the peptidase M17 family. It depends on Mn(2+) as a cofactor.

The protein resides in the cytoplasm. It carries out the reaction Release of an N-terminal amino acid, Xaa-|-Yaa-, in which Xaa is preferably Leu, but may be other amino acids including Pro although not Arg or Lys, and Yaa may be Pro. Amino acid amides and methyl esters are also readily hydrolyzed, but rates on arylamides are exceedingly low.. The catalysed reaction is Release of an N-terminal amino acid, preferentially leucine, but not glutamic or aspartic acids.. Presumably involved in the processing and regular turnover of intracellular proteins. Catalyzes the removal of unsubstituted N-terminal amino acids from various peptides. The polypeptide is Probable cytosol aminopeptidase (Clostridium tetani (strain Massachusetts / E88)).